The primary structure comprises 485 residues: ATP synthase subunit beta 2 (485 aa).

Over residues 1–10 the composition is skewed to basic and acidic residues; that stretch reads MSGMGEKSEQ. The segment at 1-27 is disordered; that stretch reads MSGMGEKSEQISKSARSTDPQEQESVA. The span at 11 to 24 shows a compositional bias: polar residues; the sequence is ISKSARSTDPQEQE. 177-184 provides a ligand contact to ATP; it reads GGAGVGKT.

The protein belongs to the ATPase alpha/beta chains family. F-type ATPases have 2 components, CF(1) - the catalytic core - and CF(0) - the membrane proton channel. CF(1) has five subunits: alpha(3), beta(3), gamma(1), delta(1), epsilon(1). CF(0) has three main subunits: a(1), b(2) and c(9-12). The alpha and beta chains form an alternating ring which encloses part of the gamma chain. CF(1) is attached to CF(0) by a central stalk formed by the gamma and epsilon chains, while a peripheral stalk is formed by the delta and b chains.

It is found in the cell inner membrane. The catalysed reaction is ATP + H2O + 4 H(+)(in) = ADP + phosphate + 5 H(+)(out). Produces ATP from ADP in the presence of a proton gradient across the membrane. The catalytic sites are hosted primarily by the beta subunits. The chain is ATP synthase subunit beta 2 from Nitrosomonas eutropha (strain DSM 101675 / C91 / Nm57).